A 301-amino-acid polypeptide reads, in one-letter code: Lufaxin (301 aa).

An N-terminal signal peptide occupies residues 1–23 (MNSINFLSIVGLISFGFIVAVKC). 4 cysteine pairs are disulfide-bonded: C52–C60, C78–C137, C102–C112, and C258–C265. N-linked (GlcNAc...) asparagine glycosylation occurs at N262.

As to quaternary structure, interacts with factor Xa. Associates with complement proconvertase C3b-B complex. In terms of tissue distribution, expressed in salivary glands.

It localises to the secreted. In terms of biological role, sand fly salivary protein with antithrombotic, and anti-complement (alternative pathway) activities. Is a slow, tight, non-competitive, and reversible inhibitor of factor Xa (FXa, F10). Is specific for FXa (Kd=3.86 nM) and does not interact with non-activated FX, or all other enzymes tested. In addition, it blocks prothrombinase and increases both prothrombin time and activated partial thromboplastin time. It also prevents protease-activated receptor 2 (F2RL1, PAR2) activation by FXa. In vivo, it abrogates edema formation triggered by injection of FXa in the paw of mice. Moreover, it prevents FeCl(3)-induced carotid artery thrombus formation and prolongs activated partial thromboplastin time ex vivo, implying that it works as an anticoagulant in vivo. It also inhibits the early steps of the alternative pathway of complement by direct binding to the proconvertase C3b-B complex, by inhibiting activation of factor B and consequently the formation of the C3 convertase. This Lutzomyia longipalpis (Sand fly) protein is Lufaxin.